The primary structure comprises 242 residues: Probable transcriptional regulatory protein Bamb_2332 (242 aa).

It belongs to the TACO1 family.

It is found in the cytoplasm. The protein is Probable transcriptional regulatory protein Bamb_2332 of Burkholderia ambifaria (strain ATCC BAA-244 / DSM 16087 / CCUG 44356 / LMG 19182 / AMMD) (Burkholderia cepacia (strain AMMD)).